Here is a 44-residue protein sequence, read N- to C-terminus: Protein PsbN (44 aa).

Residues 6–26 (FFFTFFLWFLLLSVTGYSVYV) form a helical membrane-spanning segment.

Belongs to the PsbN family.

The protein localises to the plastid. It is found in the chloroplast thylakoid membrane. Functionally, may play a role in photosystem I and II biogenesis. This is Protein PsbN from Chlamydomonas reinhardtii (Chlamydomonas smithii).